The primary structure comprises 177 residues: Inner membrane-spanning protein YciB (177 aa).

5 helical membrane-spanning segments follow: residues 22 to 42, 50 to 70, 76 to 96, 121 to 141, and 149 to 169; these read IFIASGSLIVISGLICIIHWI, ISLFSFLSVFFFGSLTIFFHN, WKITIIYIIFSLVLLISQFFT, FIWSLFFLFCAILNIYIAYYF, and FKVFGFTSLTFFLILITSIYI.

Belongs to the YciB family.

The protein resides in the cell inner membrane. Plays a role in cell envelope biogenesis, maintenance of cell envelope integrity and membrane homeostasis. The polypeptide is Inner membrane-spanning protein YciB (Buchnera aphidicola subsp. Acyrthosiphon pisum (strain APS) (Acyrthosiphon pisum symbiotic bacterium)).